The sequence spans 154 residues: NADPH-dependent 7-cyano-7-deazaguanine reductase (154 aa).

Residues 1 to 21 (MPNTDVSSLSMLGQQTETAQS) are compositionally biased toward polar residues. Residues 1–28 (MPNTDVSSLSMLGQQTETAQSPEEAVLE) form a disordered region. The active-site Thioimide intermediate is the Cys-52. Asp-59 acts as the Proton donor in catalysis. Residues 74–76 (VES) and 93–94 (HE) contribute to the substrate site.

Belongs to the GTP cyclohydrolase I family. QueF type 1 subfamily.

Its subcellular location is the cytoplasm. It carries out the reaction 7-aminomethyl-7-carbaguanine + 2 NADP(+) = 7-cyano-7-deazaguanine + 2 NADPH + 3 H(+). Its pathway is tRNA modification; tRNA-queuosine biosynthesis. Catalyzes the NADPH-dependent reduction of 7-cyano-7-deazaguanine (preQ0) to 7-aminomethyl-7-deazaguanine (preQ1). In Rhizobium johnstonii (strain DSM 114642 / LMG 32736 / 3841) (Rhizobium leguminosarum bv. viciae), this protein is NADPH-dependent 7-cyano-7-deazaguanine reductase.